Here is a 396-residue protein sequence, read N- to C-terminus: Maltose/maltodextrin-binding periplasmic protein (396 aa).

Residues 1–26 (MKIKTGARILALSALTTMMFSASALA) form the signal peptide.

It belongs to the bacterial solute-binding protein 1 family. As to quaternary structure, the complex is composed of two ATP-binding proteins (MalK), two transmembrane proteins (MalG and MalF) and a solute-binding protein (MalE).

The protein resides in the periplasm. In terms of biological role, part of the ABC transporter complex MalEFGK involved in maltose/maltodextrin import. Binds maltose and higher maltodextrins. The protein is Maltose/maltodextrin-binding periplasmic protein (malE) of Escherichia coli O157:H7.